Here is a 198-residue protein sequence, read N- to C-terminus: Lipid A 4'-phosphatase (198 aa).

A helical transmembrane segment spans residues 143–165 (AGQHTILQVTIGSLIAWGFAYLF).

Belongs to the lipid A LpxF 4'-phosphatase family.

Its subcellular location is the cell inner membrane. It participates in bacterial outer membrane biogenesis; LPS lipid A biosynthesis. In terms of biological role, removes the 4'-phosphate group from tetra- and hexaacylated lipid A species, has no 1-phosphatase or Kdo hydrolase activity. Absence of the 4'-phosphate group renders the bacteria resistant to host-derived cationic antimicrobial peptides (CAMP), allowing it to camouflage itself from the host innate immune response, and plays a critical role in the long-term colonization of the host's stomach. This Helicobacter pylori (strain J99 / ATCC 700824) (Campylobacter pylori J99) protein is Lipid A 4'-phosphatase.